The following is a 344-amino-acid chain: Dihydroorotate dehydrogenase (quinone) (344 aa).

Residues 65–69 (AGLDK) and threonine 89 each bind FMN. Substrate is bound at residue lysine 69. Position 114–118 (114–118 (NRMGF)) interacts with substrate. Residues asparagine 142 and asparagine 175 each coordinate FMN. Asparagine 175 lines the substrate pocket. Residue serine 178 is the Nucleophile of the active site. Substrate is bound at residue asparagine 180. Residues lysine 220 and threonine 248 each contribute to the FMN site. 249-250 (NT) lines the substrate pocket. FMN is bound by residues glycine 271, glycine 300, and 321 to 322 (YT).

This sequence belongs to the dihydroorotate dehydrogenase family. Type 2 subfamily. In terms of assembly, monomer. FMN is required as a cofactor.

Its subcellular location is the cell membrane. The catalysed reaction is (S)-dihydroorotate + a quinone = orotate + a quinol. Its pathway is pyrimidine metabolism; UMP biosynthesis via de novo pathway; orotate from (S)-dihydroorotate (quinone route): step 1/1. In terms of biological role, catalyzes the conversion of dihydroorotate to orotate with quinone as electron acceptor. In Paraburkholderia phymatum (strain DSM 17167 / CIP 108236 / LMG 21445 / STM815) (Burkholderia phymatum), this protein is Dihydroorotate dehydrogenase (quinone).